A 274-amino-acid chain; its full sequence is 3-methyl-2-oxobutanoate hydroxymethyltransferase (274 aa).

Mg(2+) contacts are provided by Asp-49 and Asp-88. Residues 49–50 (DS), Asp-88, and Lys-118 each bind 3-methyl-2-oxobutanoate. Glu-120 provides a ligand contact to Mg(2+). Residue Glu-187 is the Proton acceptor of the active site.

The protein belongs to the PanB family. Homodecamer; pentamer of dimers. Mg(2+) serves as cofactor.

It localises to the cytoplasm. It carries out the reaction 3-methyl-2-oxobutanoate + (6R)-5,10-methylene-5,6,7,8-tetrahydrofolate + H2O = 2-dehydropantoate + (6S)-5,6,7,8-tetrahydrofolate. It functions in the pathway cofactor biosynthesis; (R)-pantothenate biosynthesis; (R)-pantoate from 3-methyl-2-oxobutanoate: step 1/2. Its function is as follows. Catalyzes the reversible reaction in which hydroxymethyl group from 5,10-methylenetetrahydrofolate is transferred onto alpha-ketoisovalerate to form ketopantoate. The chain is 3-methyl-2-oxobutanoate hydroxymethyltransferase from Rhodopseudomonas palustris (strain TIE-1).